A 475-amino-acid chain; its full sequence is Rho GTPase-activating protein 15 (475 aa).

Residues 1–22 are disordered; sequence MERSTTSDTASEKPNPSHSTGA. Residues 80–190 enclose the PH domain; the sequence is VVEKEGYLLK…WFHAIKNAID (111 aa). Residues 281–470 enclose the Rho-GAP domain; sequence SHLHLVCEHE…LMLSEYSKIF (190 aa).

Its subcellular location is the cytoplasm. The protein resides in the membrane. Functionally, GTPase activator for the Rho-type GTPases by converting them to an inactive GDP-bound state. The chain is Rho GTPase-activating protein 15 (ARHGAP15) from Gallus gallus (Chicken).